We begin with the raw amino-acid sequence, 381 residues long: Pectin lyase 1 (381 aa).

Residues 1 to 20 (MKYASFIAAAAAALASAVSA) form the signal peptide. 2 disulfides stabilise this stretch: Cys-83/Cys-102 and Cys-92/Cys-227. Asn-130 is a glycosylation site (N-linked (GlcNAc...) asparagine). Residue Arg-257 is part of the active site. A disulfide bridge links Cys-324 with Cys-332.

Belongs to the polysaccharide lyase 1 family.

The protein resides in the secreted. The catalysed reaction is Eliminative cleavage of (1-&gt;4)-alpha-D-galacturonan methyl ester to give oligosaccharides with 4-deoxy-6-O-methyl-alpha-D-galact-4-enuronosyl groups at their non-reducing ends.. In terms of biological role, pectinolytic enzymes consist of four classes of enzymes: pectin lyase, polygalacturonase, pectin methylesterase and rhamnogalacturonase. Among pectinolytic enzymes, pectin lyase is the most important in depolymerization of pectin, since it cleaves internal glycosidic bonds of highly methylated pectins. The sequence is that of Pectin lyase 1 (pel1) from Aspergillus oryzae (strain ATCC 42149 / RIB 40) (Yellow koji mold).